Here is a 154-residue protein sequence, read N- to C-terminus: Crossover junction endodeoxyribonuclease RuvC (154 aa).

Catalysis depends on residues Asp-7, Glu-67, and Asp-139. Mg(2+) is bound by residues Asp-7, Glu-67, and Asp-139.

This sequence belongs to the RuvC family. Homodimer which binds Holliday junction (HJ) DNA. The HJ becomes 2-fold symmetrical on binding to RuvC with unstacked arms; it has a different conformation from HJ DNA in complex with RuvA. In the full resolvosome a probable DNA-RuvA(4)-RuvB(12)-RuvC(2) complex forms which resolves the HJ. Mg(2+) is required as a cofactor.

Its subcellular location is the cytoplasm. It catalyses the reaction Endonucleolytic cleavage at a junction such as a reciprocal single-stranded crossover between two homologous DNA duplexes (Holliday junction).. Its function is as follows. The RuvA-RuvB-RuvC complex processes Holliday junction (HJ) DNA during genetic recombination and DNA repair. Endonuclease that resolves HJ intermediates. Cleaves cruciform DNA by making single-stranded nicks across the HJ at symmetrical positions within the homologous arms, yielding a 5'-phosphate and a 3'-hydroxyl group; requires a central core of homology in the junction. The consensus cleavage sequence is 5'-(A/T)TT(C/G)-3'. Cleavage occurs on the 3'-side of the TT dinucleotide at the point of strand exchange. HJ branch migration catalyzed by RuvA-RuvB allows RuvC to scan DNA until it finds its consensus sequence, where it cleaves and resolves the cruciform DNA. This chain is Crossover junction endodeoxyribonuclease RuvC, found in Prochlorococcus marinus (strain MIT 9313).